The chain runs to 89 residues: Small ribosomal subunit protein uS15 (89 aa).

This sequence belongs to the universal ribosomal protein uS15 family. In terms of assembly, part of the 30S ribosomal subunit. Forms a bridge to the 50S subunit in the 70S ribosome, contacting the 23S rRNA.

One of the primary rRNA binding proteins, it binds directly to 16S rRNA where it helps nucleate assembly of the platform of the 30S subunit by binding and bridging several RNA helices of the 16S rRNA. In terms of biological role, forms an intersubunit bridge (bridge B4) with the 23S rRNA of the 50S subunit in the ribosome. This is Small ribosomal subunit protein uS15 from Baumannia cicadellinicola subsp. Homalodisca coagulata.